A 429-amino-acid polypeptide reads, in one-letter code: Adenylosuccinate synthetase (429 aa).

Residues 12–18 and 40–42 contribute to the GTP site; these read GDEGKGK and GHT. Catalysis depends on Asp-13, which acts as the Proton acceptor. Residues Asp-13 and Gly-40 each coordinate Mg(2+). IMP-binding positions include 13 to 16, 38 to 41, Thr-129, Arg-143, Gln-223, Thr-238, and Arg-302; these read DEGK and NAGH. The active-site Proton donor is His-41. A substrate-binding site is contributed by 298–304; sequence VVTGRKR. GTP is bound by residues Arg-304, 330 to 332, and 412 to 414; these read KLD and STS.

It belongs to the adenylosuccinate synthetase family. As to quaternary structure, homodimer. It depends on Mg(2+) as a cofactor.

It localises to the cytoplasm. The catalysed reaction is IMP + L-aspartate + GTP = N(6)-(1,2-dicarboxyethyl)-AMP + GDP + phosphate + 2 H(+). Its pathway is purine metabolism; AMP biosynthesis via de novo pathway; AMP from IMP: step 1/2. Its function is as follows. Plays an important role in the de novo pathway of purine nucleotide biosynthesis. Catalyzes the first committed step in the biosynthesis of AMP from IMP. The polypeptide is Adenylosuccinate synthetase (Brucella anthropi (strain ATCC 49188 / DSM 6882 / CCUG 24695 / JCM 21032 / LMG 3331 / NBRC 15819 / NCTC 12168 / Alc 37) (Ochrobactrum anthropi)).